The primary structure comprises 575 residues: Alpha-(1,6)-fucosyltransferase (575 aa).

Topologically, residues 1–9 are cytoplasmic; the sequence is MRPWTGSWR. The chain crosses the membrane as a helical; Signal-anchor for type II membrane protein span at residues 10–30; that stretch reads WIMLILFAWGTLLFYIGGHLV. The Lumenal segment spans residues 31–575; it reads RDNDHPDHSS…KYPTYPEAEK (545 aa). Disulfide bonds link cysteine 204–cysteine 266, cysteine 212–cysteine 230, and cysteine 218–cysteine 222. A GT23 domain is found at 206–493; sequence KAKKLVCNIN…PDASANFHSL (288 aa). Phosphoserine is present on serine 278. Residues 299–305 carry the SH3-binding motif; sequence PRPPYLP. The interval 365–366 is important for donor substrate binding; it reads RR. Cysteine 465 and cysteine 472 form a disulfide bridge. One can recognise an SH3 domain in the interval 502-563; the sequence is QNAHNQIAIY…PSYKVREKIE (62 aa).

Belongs to the glycosyltransferase 23 family. Post-translationally, tyrosine phosphorylated by PKDCC/VLK.

It localises to the golgi apparatus. Its subcellular location is the golgi stack membrane. The catalysed reaction is N(4)-{beta-D-GlcNAc-(1-&gt;2)-alpha-D-Man-(1-&gt;3)-[beta-D-GlcNAc-(1-&gt;2)-alpha-D-Man-(1-&gt;6)]-beta-D-Man-(1-&gt;4)-beta-D-GlcNAc-(1-&gt;4)-beta-D-GlcNAc}-L-asparaginyl-[protein] + GDP-beta-L-fucose = an N(4)-{beta-D-GlcNAc-(1-&gt;2)-alpha-D-Man-(1-&gt;3)-[beta-D-GlcNAc-(1-&gt;2)-alpha-D-Man-(1-&gt;6)]-beta-D-Man-(1-&gt;4)-beta-D-GlcNAc-(1-&gt;4)-[alpha-L-Fuc-(1-&gt;6)]-beta-D-GlcNAc}-L-asparaginyl-[protein] + GDP + H(+). It participates in protein modification; protein glycosylation. Functionally, catalyzes the addition of fucose in alpha 1-6 linkage to the first GlcNAc residue, next to the peptide chains in N-glycans. The polypeptide is Alpha-(1,6)-fucosyltransferase (FUT8) (Homo sapiens (Human)).